The following is an 815-amino-acid chain: Leucine--tRNA ligase (815 aa).

Positions 42–52 (PYPSGRLHMGH) match the 'HIGH' region motif. The short motif at 574–578 (KMSKS) is the 'KMSKS' region element. Lys577 contacts ATP.

Belongs to the class-I aminoacyl-tRNA synthetase family.

It is found in the cytoplasm. The catalysed reaction is tRNA(Leu) + L-leucine + ATP = L-leucyl-tRNA(Leu) + AMP + diphosphate. The chain is Leucine--tRNA ligase from Alcanivorax borkumensis (strain ATCC 700651 / DSM 11573 / NCIMB 13689 / SK2).